Reading from the N-terminus, the 173-residue chain is Protein tyrosine phosphatase type IVA 1 (173 aa).

The Tyrosine-protein phosphatase domain maps to 8–161 (APVEVTYKNM…YRPKMRLRFK (154 aa)). An intrachain disulfide couples cysteine 49 to cysteine 104. Residue aspartate 72 is the Proton donor of the active site. The segment at 97 to 132 (GCCIAVHCVAGLGRAPVLVALALIEGGMKYEDAVQF) is interaction with ATF5. Cysteine 104 functions as the Phosphocysteine intermediate in the catalytic mechanism. 105–110 (VAGLGR) is a phosphate binding site. Arginine 110 is a substrate binding site. Cysteine 170 carries the cysteine methyl ester modification. Cysteine 170 carries the S-farnesyl cysteine lipid modification. Positions 171 to 173 (CIQ) are cleaved as a propeptide — removed in mature form.

The protein belongs to the protein-tyrosine phosphatase family. As to quaternary structure, homotrimer. Interacts with ATF5. Interacts with tubulin. Post-translationally, farnesylated. Farnesylation is required for membrane targeting. Unfarnesylated forms are shifted into the nucleus. As to expression, expressed in bone marrow, lymph nodes, T lymphocytes, spleen, thymus and tonsil. Overexpressed in tumor cell lines.

The protein resides in the cell membrane. It is found in the early endosome. It localises to the endoplasmic reticulum. Its subcellular location is the cytoplasm. The protein localises to the cytoskeleton. The protein resides in the spindle. It is found in the nucleus. It catalyses the reaction O-phospho-L-tyrosyl-[protein] + H2O = L-tyrosyl-[protein] + phosphate. Its activity is regulated as follows. Inhibited by sodium orthovanadate and pentamidine. Protein tyrosine phosphatase which stimulates progression from G1 into S phase during mitosis. May play a role in the development and maintenance of differentiating epithelial tissues. Enhances cell proliferation, cell motility and invasive activity, and promotes cancer metastasis. The polypeptide is Protein tyrosine phosphatase type IVA 1 (PTP4A1) (Homo sapiens (Human)).